Consider the following 274-residue polypeptide: Large ribosomal subunit protein uL2 (274 aa).

Residues Val-223 to Lys-274 are disordered.

This sequence belongs to the universal ribosomal protein uL2 family. In terms of assembly, part of the 50S ribosomal subunit. Forms a bridge to the 30S subunit in the 70S ribosome.

One of the primary rRNA binding proteins. Required for association of the 30S and 50S subunits to form the 70S ribosome, for tRNA binding and peptide bond formation. It has been suggested to have peptidyltransferase activity; this is somewhat controversial. Makes several contacts with the 16S rRNA in the 70S ribosome. This is Large ribosomal subunit protein uL2 from Aliivibrio fischeri (strain ATCC 700601 / ES114) (Vibrio fischeri).